Here is a 493-residue protein sequence, read N- to C-terminus: MSFKDLRSFIEHLESNGELKRISHPVDPHLEMTEIADRVLRSKGPALLFENPVGNDMPVLANLFGTPKRVAMALGKEDPLALRDVGELLAFLKEPEPPRGFKDAISKIPMFKQALNMPPKTVRNPPCQEVVKTAEEVDLTKLPIQHCWPGDVAPLVTWGLTITKGPRQKRQNLGIYRQQLLGKDKLIMRWLDHRGGALDFKDFKEKHPGDRYPVVVALGSDPVTILGAVTPVPDSMSEYAFAGLLRGERTEVCKAISCDLEVPATSEIILEGYIDPEEMAEEGPYGDHTGYYNETDSFPVFTVTHITHRKDAIYHSTYTGRPPDEPAMLGVALNEVFVPILRKQYPEIIDFYLPPEGCSYRMAVISIRKQYPGHAKRVMMGAWSFLRQFMYTKFIVVVDEDVNCRDWNDVIWAITTRMDPKRDTVMIENTPIDYLDFASPVAGLGSKMGMDATNKWEGETDREWGTPIVMDEAVKQKVDEIWSDLGIDDAPTL.

Mn(2+) is bound at residue asparagine 172. Prenylated FMN contacts are provided by residues isoleucine 175–arginine 177, arginine 189–leucine 191, and arginine 194–glycine 195. Glutamate 238 contacts Mn(2+). Catalysis depends on aspartate 287, which acts as the Proton donor.

Belongs to the UbiD family. Homohexamer. It depends on prenylated FMN as a cofactor. Requires Mn(2+) as cofactor.

Its subcellular location is the cell membrane. It catalyses the reaction a 4-hydroxy-3-(all-trans-polyprenyl)benzoate + H(+) = a 2-(all-trans-polyprenyl)phenol + CO2. It participates in cofactor biosynthesis; ubiquinone biosynthesis. Functionally, catalyzes the decarboxylation of 3-octaprenyl-4-hydroxy benzoate to 2-octaprenylphenol, an intermediate step in ubiquinone biosynthesis. This chain is 3-octaprenyl-4-hydroxybenzoate carboxy-lyase, found in Shewanella piezotolerans (strain WP3 / JCM 13877).